A 214-amino-acid chain; its full sequence is MSSAGLNVGKKNAYTAVKVDPDGDYCTPGAFELERLFWKGCPKYTHVNEVWPNLYIGDEKTALDRYSLEKAGFTHILNAAHGQRNVDTGPEYYQDMTVEYHGVEADDLPTFKLSQFFYSASEFIDNALQDERNKVLVHCAMGRSRSATLVLAYLMIYKNMTVVDAIEQVSRHRCILPNRGFLKQLRELDIELALQRRNTKNSLPSNDDENSTTI.

Residues His-46–Leu-194 enclose the Tyrosine-protein phosphatase domain. Position 138 to 145 (His-138 to Arg-145) interacts with substrate. Cys-139 acts as the Phosphocysteine intermediate in catalysis.

It belongs to the protein-tyrosine phosphatase family. Non-receptor class dual specificity subfamily.

The protein localises to the cytoplasm. Its subcellular location is the nucleus. It carries out the reaction O-phospho-L-tyrosyl-[protein] + H2O = L-tyrosyl-[protein] + phosphate. The enzyme catalyses O-phospho-L-seryl-[protein] + H2O = L-seryl-[protein] + phosphate. It catalyses the reaction O-phospho-L-threonyl-[protein] + H2O = L-threonyl-[protein] + phosphate. Its function is as follows. Dual specificity phosphatase able to dephosphorylate phosphotyrosine, phosphoserine and phosphothreonine residues within the same substrate, with a preference for phosphotyrosine as a substrate. Involved in the modulation of AMPK and MAPK1/2 signaling pathways. This chain is Dual specificity phosphatase 29 (DUSP29), found in Gallus gallus (Chicken).